The sequence spans 81 residues: Short neurotoxin 1 (81 aa).

The first 21 residues, 1-21 (MKTLLLTLVVVTIVFLDLGYT), serve as a signal peptide directing secretion. Disulfide bonds link Cys24/Cys43, Cys38/Cys60, Cys62/Cys73, and Cys74/Cys79.

Belongs to the three-finger toxin family. Short-chain subfamily. Type I alpha-neurotoxin sub-subfamily. As to expression, expressed by the venom gland.

It localises to the secreted. Its function is as follows. Binds to muscle nicotinic acetylcholine receptor (nAChR) and inhibit acetylcholine from binding to the receptor, thereby impairing neuromuscular transmission. The polypeptide is Short neurotoxin 1 (Notechis scutatus scutatus (Mainland tiger snake)).